Consider the following 251-residue polypeptide: 5'-nucleotidase SurE (251 aa).

Positions 8, 9, 39, and 90 each coordinate a divalent metal cation.

It belongs to the SurE nucleotidase family. Requires a divalent metal cation as cofactor.

It localises to the cytoplasm. It catalyses the reaction a ribonucleoside 5'-phosphate + H2O = a ribonucleoside + phosphate. Nucleotidase that shows phosphatase activity on nucleoside 5'-monophosphates. This chain is 5'-nucleotidase SurE, found in Legionella pneumophila subsp. pneumophila (strain Philadelphia 1 / ATCC 33152 / DSM 7513).